We begin with the raw amino-acid sequence, 580 residues long: Threonine--tRNA ligase (580 aa).

Positions 179–476 are catalytic; it reads DHRKIGKDLN…LLEQTKGILP (298 aa). Zn(2+) contacts are provided by Cys272, His323, and His453.

Belongs to the class-II aminoacyl-tRNA synthetase family. Homodimer. Zn(2+) serves as cofactor.

It localises to the cytoplasm. It carries out the reaction tRNA(Thr) + L-threonine + ATP = L-threonyl-tRNA(Thr) + AMP + diphosphate + H(+). Its function is as follows. Catalyzes the attachment of threonine to tRNA(Thr) in a two-step reaction: L-threonine is first activated by ATP to form Thr-AMP and then transferred to the acceptor end of tRNA(Thr). Also edits incorrectly charged L-seryl-tRNA(Thr). This chain is Threonine--tRNA ligase, found in Ureaplasma parvum serovar 3 (strain ATCC 27815 / 27 / NCTC 11736).